The chain runs to 575 residues: Dual specificity protein phosphatase YVH1 (575 aa).

A disordered region spans residues 185–213; the sequence is KHNNNNNNNNNNNNNNNNNNNNNNCCTFK. The segment covering 187–208 has biased composition (low complexity); the sequence is NNNNNNNNNNNNNNNNNNNNNN. Positions 283–435 constitute a Tyrosine-protein phosphatase domain; sequence NYKINQEEDT…LLLYEKMNYT (153 aa). The active-site Phosphocysteine intermediate is Cys-379. Cys-476 and Cys-530 together coordinate Zn(2+).

It belongs to the protein-tyrosine phosphatase family. Non-receptor class dual specificity subfamily. Interacts with PES. Requires Zn(2+) as cofactor.

Its subcellular location is the cytoplasm. It is found in the nucleus. It carries out the reaction O-phospho-L-tyrosyl-[protein] + H2O = L-tyrosyl-[protein] + phosphate. It catalyses the reaction O-phospho-L-seryl-[protein] + H2O = L-seryl-[protein] + phosphate. Its function is as follows. Dual specificity protein phosphatase which dephosphorylates both phosphotyrosine and phosphoserine residues. The sequence is that of Dual specificity protein phosphatase YVH1 from Plasmodium falciparum (isolate 3D7).